Consider the following 303-residue polypeptide: Dihydroorotate dehydrogenase B (NAD(+)), catalytic subunit (303 aa).

FMN contacts are provided by residues serine 21 and 45–46 (KG). Residues lysine 45 and 69 to 73 (NSIGL) contribute to the substrate site. Residues asparagine 99 and asparagine 127 each coordinate FMN. Asparagine 127 contributes to the substrate binding site. The active-site Nucleophile is cysteine 130. Lysine 165 and isoleucine 191 together coordinate FMN. 192-193 (NT) lines the substrate pocket. Residues glycine 217, 243–244 (GG), and 265–266 (GT) each bind FMN.

This sequence belongs to the dihydroorotate dehydrogenase family. Type 1 subfamily. As to quaternary structure, heterotetramer of 2 PyrK and 2 PyrD type B subunits. Requires FMN as cofactor.

The protein resides in the cytoplasm. The catalysed reaction is (S)-dihydroorotate + NAD(+) = orotate + NADH + H(+). It functions in the pathway pyrimidine metabolism; UMP biosynthesis via de novo pathway; orotate from (S)-dihydroorotate (NAD(+) route): step 1/1. Catalyzes the conversion of dihydroorotate to orotate with NAD(+) as electron acceptor. This is Dihydroorotate dehydrogenase B (NAD(+)), catalytic subunit (pyrD) from Thermodesulfovibrio yellowstonii (strain ATCC 51303 / DSM 11347 / YP87).